Here is a 475-residue protein sequence, read N- to C-terminus: NADH-quinone oxidoreductase subunit N 1 (475 aa).

14 helical membrane-spanning segments follow: residues 8-28 (VMPL…EAAT), 36-56 (LFAI…PSEP), 67-87 (GGFF…ITLI), 100-120 (GEYY…SAAA), 122-142 (LTIL…LAGI), 157-177 (FLLG…IYGA), 199-219 (FLSG…AVPF), 244-264 (AAAL…LETF), 268-288 (PTAI…AALI), 295-315 (MFAY…ATGT), 322-342 (VLYY…IIIL), 366-386 (AFLM…GGFI), 403-423 (LAVA…RVVI), and 443-463 (ATIA…SLLI).

It belongs to the complex I subunit 2 family. NDH-1 is composed of 14 different subunits. Subunits NuoA, H, J, K, L, M, N constitute the membrane sector of the complex.

The protein resides in the cell inner membrane. It carries out the reaction a quinone + NADH + 5 H(+)(in) = a quinol + NAD(+) + 4 H(+)(out). Functionally, NDH-1 shuttles electrons from NADH, via FMN and iron-sulfur (Fe-S) centers, to quinones in the respiratory chain. The immediate electron acceptor for the enzyme in this species is believed to be a menaquinone. Couples the redox reaction to proton translocation (for every two electrons transferred, four hydrogen ions are translocated across the cytoplasmic membrane), and thus conserves the redox energy in a proton gradient. This chain is NADH-quinone oxidoreductase subunit N 1, found in Chloroherpeton thalassium (strain ATCC 35110 / GB-78).